The primary structure comprises 179 residues: Acireductone dioxygenase (179 aa).

Fe(2+)-binding residues include His-88, His-90, Glu-94, and His-133. Residues His-88, His-90, Glu-94, and His-133 each coordinate Ni(2+).

The protein belongs to the acireductone dioxygenase (ARD) family. As to quaternary structure, monomer. Interacts with MMP14. The cofactor is Fe(2+). It depends on Ni(2+) as a cofactor.

The protein resides in the cytoplasm. The protein localises to the nucleus. It is found in the cell membrane. It carries out the reaction 1,2-dihydroxy-5-(methylsulfanyl)pent-1-en-3-one + O2 = 4-methylsulfanyl-2-oxobutanoate + formate + 2 H(+). The catalysed reaction is 1,2-dihydroxy-5-(methylsulfanyl)pent-1-en-3-one + O2 = 3-(methylsulfanyl)propanoate + CO + formate + 2 H(+). Its pathway is amino-acid biosynthesis; L-methionine biosynthesis via salvage pathway; L-methionine from S-methyl-5-thio-alpha-D-ribose 1-phosphate: step 5/6. In terms of biological role, catalyzes 2 different reactions between oxygen and the acireductone 1,2-dihydroxy-3-keto-5-methylthiopentene (DHK-MTPene) depending upon the metal bound in the active site. Fe-containing acireductone dioxygenase (Fe-ARD) produces formate and 2-keto-4-methylthiobutyrate (KMTB), the alpha-ketoacid precursor of methionine in the methionine recycle pathway. Ni-containing acireductone dioxygenase (Ni-ARD) produces methylthiopropionate, carbon monoxide and formate, and does not lie on the methionine recycle pathway. The sequence is that of Acireductone dioxygenase (adi1) from Xenopus laevis (African clawed frog).